A 117-amino-acid chain; its full sequence is MSSTLSAYRNALRATRIAFRQDLPILQAARMQLKQGIRDNSNLQTQPEIEEAVQKLNDVAKFLIQNIVQGEKQQDGKYFLNFHEKTELGDNETIKQGRKEMGSLAGKKGNSIKSCKD.

The transit peptide at 1-10 (MSSTLSAYRN) directs the protein to the mitochondrion.

The protein belongs to the complex I LYR family. MZM1 subfamily. Interacts with RIP1.

The protein localises to the mitochondrion matrix. In terms of biological role, assembly factor required for Rieske Fe-S protein RIP1 incorporation into the cytochrome b-c1 (CIII) complex. Functions as a chaperone, binding to this subunit within the mitochondrial matrix and stabilizing it prior to its translocation and insertion into the late CIII dimeric intermediate within the mitochondrial inner membrane. Modulates the mitochondrial matrix zinc pool. The protein is Mitochondrial zinc maintenance protein 1, mitochondrial (MZM1) of Candida dubliniensis (strain CD36 / ATCC MYA-646 / CBS 7987 / NCPF 3949 / NRRL Y-17841) (Yeast).